The primary structure comprises 224 residues: Lipoprotein-releasing system ATP-binding protein LolD (224 aa).

The ABC transporter domain occupies 5 to 224 (LVLDGLTKAY…VVRLEAGRVV (220 aa)). 42–49 (APSGAGKS) contacts ATP.

Belongs to the ABC transporter superfamily. Lipoprotein translocase (TC 3.A.1.125) family. The complex is composed of two ATP-binding proteins (LolD) and two transmembrane proteins (LolC and LolE).

Its subcellular location is the cell inner membrane. Its function is as follows. Part of the ABC transporter complex LolCDE involved in the translocation of mature outer membrane-directed lipoproteins, from the inner membrane to the periplasmic chaperone, LolA. Responsible for the formation of the LolA-lipoprotein complex in an ATP-dependent manner. This Cereibacter sphaeroides (strain ATCC 17023 / DSM 158 / JCM 6121 / CCUG 31486 / LMG 2827 / NBRC 12203 / NCIMB 8253 / ATH 2.4.1.) (Rhodobacter sphaeroides) protein is Lipoprotein-releasing system ATP-binding protein LolD.